The primary structure comprises 335 residues: UPF0353 protein MT1528 (335 aa).

A run of 2 helical transmembrane segments spans residues 18–38 (WFFL…LMQL) and 67–87 (VPAI…AGPT). Residues 98–294 (VVMLVIDVSQ…AELRAVYSSL (197 aa)) enclose the VWFA domain. Residues 309 to 329 (VGWLRLGALALALAALAALLI) traverse the membrane as a helical segment.

Belongs to the UPF0353 family.

The protein resides in the cell membrane. The chain is UPF0353 protein MT1528 from Mycobacterium tuberculosis (strain CDC 1551 / Oshkosh).